Here is a 343-residue protein sequence, read N- to C-terminus: N-acetyl-gamma-glutamyl-phosphate reductase (343 aa).

The active site involves cysteine 146.

It belongs to the NAGSA dehydrogenase family. Type 1 subfamily.

Its subcellular location is the cytoplasm. The enzyme catalyses N-acetyl-L-glutamate 5-semialdehyde + phosphate + NADP(+) = N-acetyl-L-glutamyl 5-phosphate + NADPH + H(+). Its pathway is amino-acid biosynthesis; L-arginine biosynthesis; N(2)-acetyl-L-ornithine from L-glutamate: step 3/4. In terms of biological role, catalyzes the NADPH-dependent reduction of N-acetyl-5-glutamyl phosphate to yield N-acetyl-L-glutamate 5-semialdehyde. This chain is N-acetyl-gamma-glutamyl-phosphate reductase, found in Pseudarthrobacter chlorophenolicus (strain ATCC 700700 / DSM 12829 / CIP 107037 / JCM 12360 / KCTC 9906 / NCIMB 13794 / A6) (Arthrobacter chlorophenolicus).